A 319-amino-acid polypeptide reads, in one-letter code: Phospho-N-acetylmuramoyl-pentapeptide-transferase (319 aa).

The next 10 helical transmembrane spans lie at 5 to 25 (LIPF…FIGF), 51 to 71 (TMGG…VLIW), 79 to 99 (AWIL…DDGI), 116 to 136 (LGQI…HFAF), 149 to 169 (SFLF…AVNL), 172 to 192 (GLDG…AWIA), 197 to 217 (NWVI…FFIF), 224 to 244 (IFMG…VSIF), 252 to 272 (LLIG…VISF), and 299 to 319 (VDIV…IIWG).

Belongs to the glycosyltransferase 4 family. MraY subfamily. Mg(2+) serves as cofactor.

The protein localises to the cell membrane. The catalysed reaction is UDP-N-acetyl-alpha-D-muramoyl-L-alanyl-gamma-D-glutamyl-L-lysyl-D-alanyl-D-alanine + di-trans,octa-cis-undecaprenyl phosphate = Mur2Ac(oyl-L-Ala-gamma-D-Glu-L-Lys-D-Ala-D-Ala)-di-trans,octa-cis-undecaprenyl diphosphate + UMP. It participates in cell wall biogenesis; peptidoglycan biosynthesis. Catalyzes the initial step of the lipid cycle reactions in the biosynthesis of the cell wall peptidoglycan: transfers peptidoglycan precursor phospho-MurNAc-pentapeptide from UDP-MurNAc-pentapeptide onto the lipid carrier undecaprenyl phosphate, yielding undecaprenyl-pyrophosphoryl-MurNAc-pentapeptide, known as lipid I. The protein is Phospho-N-acetylmuramoyl-pentapeptide-transferase of Lactobacillus johnsonii (strain CNCM I-12250 / La1 / NCC 533).